We begin with the raw amino-acid sequence, 642 residues long: Protein INCREASED PETAL GROWTH ANISOTROPY 1 (642 aa).

The tract at residues 1 to 60 (MVAGKVRVTMGFHKSPSTKKTKDMPSPLPLPPPPPPPLKPPSSGSATTKPPINPSKPGFT) is disordered. Over residues 26–40 (SPLPLPPPPPPPLKP) the composition is skewed to pro residues. The stretch at 80-183 (AASHNGVVSE…EAEIVELRKL (104 aa)) forms a coiled coil. The tract at residues 223-351 (NLPEPITNQE…PPKSLSIASA (129 aa)) is disordered. Basic and acidic residues predominate over residues 247 to 256 (DIYRKDEIES). Residues 258–277 (SRSSNSEELTESSSLSTVRS) are compositionally biased toward low complexity. Over residues 302–344 (DPPPQKSIPPPPPPPPPPLLQQPPPPPSVSKAPPPPPPPPPPK) the composition is skewed to pro residues.

This sequence belongs to the IPGA1 family. Associates to cortical microtubules via its N-terminal region. Interacts with ANGUSTIFOLIA (AN) on microtubule upon mechanical stress to regulate microtubule organization. Binds to the microtubule-severing enzyme KATANIN (KTN1). In terms of tissue distribution, expressed ubiquitously at all development stages, with highest in developing petals. During mechanical stress, accumulates in granules on microtubules.

It localises to the cytoplasm. The protein localises to the cytoskeleton. The protein resides in the cytosol. Its subcellular location is the cell membrane. Its function is as follows. Microtubule-associated protein involved in the regulation of anisotropic petal and cotyledons growth and shape by affecting cortical microtubule organization. Prevents cortical microtubules organization into parallel arrays oriented perpendicular to the axis of cell elongation thus limiting anisotropic cell growth in the late phases of petal development. Cooperatively with ANGUSTIFOLIA (AN), negatively regulates cortical microtubules (CMTs) organization in response to mechanical stress and modulates pavement cells morphogenesis leading to puzzle shape, probably in an AAA1/KTN1-dependent manner. This chain is Protein INCREASED PETAL GROWTH ANISOTROPY 1, found in Arabidopsis thaliana (Mouse-ear cress).